Consider the following 337-residue polypeptide: Thiazole synthase (337 aa).

Residues methionine 1–alanine 41 form a disordered region. Residues glycine 10 to glycine 25 show a composition bias toward low complexity. Gly residues predominate over residues leucine 26 to alanine 41. Lysine 144 functions as the Schiff-base intermediate with DXP in the catalytic mechanism. Residues glycine 205, alanine 231–glycine 232, and asparagine 253–threonine 254 contribute to the 1-deoxy-D-xylulose 5-phosphate site. A disordered region spans residues phenylalanine 302–arginine 337. The span at valine 319–arginine 337 shows a compositional bias: low complexity.

It belongs to the ThiG family. As to quaternary structure, homotetramer. Forms heterodimers with either ThiH or ThiS.

It localises to the cytoplasm. It catalyses the reaction [ThiS sulfur-carrier protein]-C-terminal-Gly-aminoethanethioate + 2-iminoacetate + 1-deoxy-D-xylulose 5-phosphate = [ThiS sulfur-carrier protein]-C-terminal Gly-Gly + 2-[(2R,5Z)-2-carboxy-4-methylthiazol-5(2H)-ylidene]ethyl phosphate + 2 H2O + H(+). The protein operates within cofactor biosynthesis; thiamine diphosphate biosynthesis. Catalyzes the rearrangement of 1-deoxy-D-xylulose 5-phosphate (DXP) to produce the thiazole phosphate moiety of thiamine. Sulfur is provided by the thiocarboxylate moiety of the carrier protein ThiS. In vitro, sulfur can be provided by H(2)S. This is Thiazole synthase from Frankia casuarinae (strain DSM 45818 / CECT 9043 / HFP020203 / CcI3).